Here is a 625-residue protein sequence, read N- to C-terminus: Adenine deaminase 2 (625 aa).

Belongs to the metallo-dependent hydrolases superfamily. Adenine deaminase family. Mn(2+) serves as cofactor.

The catalysed reaction is adenine + H2O + H(+) = hypoxanthine + NH4(+). This is Adenine deaminase 2 from Bradyrhizobium diazoefficiens (strain JCM 10833 / BCRC 13528 / IAM 13628 / NBRC 14792 / USDA 110).